A 193-amino-acid chain; its full sequence is MTEYVLLLIGTVLVNNFVLVQFLGLCPFMGVSSKLDTAIGMSLATTFVLTLASVTSYLVNQYILIPLDITYLRTMSFILVIAVVVQFTEMVVRKTSPTLYRLLGIFLPLITTNCAVLGVALLNIKEDHSFLQSAVYGFGAAVGFSLVLVLFAALRERLAAADVPTPFKGASIALITAGLMSMAFMGFTGLVKF.

Helical transmembrane passes span Val-5 to Leu-25, Ile-39 to Val-59, Ile-63 to Val-83, Leu-102 to Leu-122, Ala-134 to Leu-154, and Ser-171 to Val-191.

Belongs to the NqrDE/RnfAE family. The complex is composed of six subunits: RnfA, RnfB, RnfC, RnfD, RnfE and RnfG.

It localises to the cell inner membrane. Its function is as follows. Part of a membrane-bound complex that couples electron transfer with translocation of ions across the membrane. This is Ion-translocating oxidoreductase complex subunit A from Pseudoalteromonas translucida (strain TAC 125).